We begin with the raw amino-acid sequence, 140 residues long: ATP synthase epsilon chain (140 aa).

Belongs to the ATPase epsilon chain family. As to quaternary structure, F-type ATPases have 2 components, CF(1) - the catalytic core - and CF(0) - the membrane proton channel. CF(1) has five subunits: alpha(3), beta(3), gamma(1), delta(1), epsilon(1). CF(0) has three main subunits: a, b and c.

It is found in the cell inner membrane. Produces ATP from ADP in the presence of a proton gradient across the membrane. The chain is ATP synthase epsilon chain from Colwellia maris.